A 135-amino-acid chain; its full sequence is Holo-[acyl-carrier-protein] synthase (135 aa).

Residues D8 and E57 each coordinate Mg(2+).

This sequence belongs to the P-Pant transferase superfamily. AcpS family. The cofactor is Mg(2+).

It localises to the cytoplasm. It carries out the reaction apo-[ACP] + CoA = holo-[ACP] + adenosine 3',5'-bisphosphate + H(+). Its function is as follows. Transfers the 4'-phosphopantetheine moiety from coenzyme A to a Ser of acyl-carrier-protein. This chain is Holo-[acyl-carrier-protein] synthase, found in Methylobacterium sp. (strain 4-46).